We begin with the raw amino-acid sequence, 413 residues long: Aminopeptidase 2 (413 aa).

Residues glutamate 250, glutamate 316, glutamate 340, histidine 345, histidine 378, and aspartate 380 each contribute to the a divalent metal cation site.

It belongs to the peptidase M29 family. As to quaternary structure, homodimer. It depends on Co(2+) as a cofactor. The cofactor is Zn(2+). Mg(2+) serves as cofactor.

Its function is as follows. Broad specificity metal-dependent exopeptidase, releasing all N-terminal amino acids. In Geobacillus stearothermophilus (Bacillus stearothermophilus), this protein is Aminopeptidase 2.